Here is a 330-residue protein sequence, read N- to C-terminus: 2-alkyl-3-oxoalkanoate reductase (330 aa).

The active-site Proton acceptor is Y139. Position 143 (K143) interacts with NADP(+).

It belongs to the 3-beta-HSD family. Homodimer.

It catalyses the reaction a (2R,3S)-2-alkyl-3-hydroxyalkanoate + NADP(+) = an (R)-2-alkyl-3-oxoalkanoate + NADPH + H(+). In terms of biological role, involved in olefin biosynthesis. Catalyzes the reversible stereospecific NADPH-dependent reduction of 2-alkyl-3-oxoalkanoic acids to 2-alkyl-3-hydroxyalkanoic acids. In the oxidative direction, syn-2-decyl-3-hydroxytetradecanoic acid is the preferred substrate. In the reductive direction, (2R/S)-2-hexyl-3-ketodecanoic acid is accepted as substrate. The protein is 2-alkyl-3-oxoalkanoate reductase of Stenotrophomonas maltophilia (strain K279a).